The chain runs to 629 residues: Serine/threonine-protein kinase ICK (629 aa).

Residues 4 to 284 enclose the Protein kinase domain; it reads YTTIKQLGDG…ASQALRYPYF (281 aa). ATP is bound by residues 10-18 and Lys33; that span reads LGDGTYGSV. Residue Asp125 is the Proton acceptor of the active site. Residue Thr157 is modified to Phosphothreonine; by CDK7. The residue at position 159 (Tyr159) is a Phosphotyrosine. Ser161 carries the post-translational modification Phosphoserine. 3 disordered regions span residues 292–376, 455–483, and 581–629; these read IISK…SLHN, SESVGTGTTVSTQASSQRRDTPTLQSSAK, and SSLK…PSRR. Over residues 296–306 the composition is skewed to basic and acidic residues; it reads DSGKPQREVQD. Over residues 309-321 the composition is skewed to pro residues; that stretch reads GPPPYIKPAPPAQ. Low complexity-rich tracts occupy residues 322 to 344 and 457 to 470; these read APAKAYTLISSRPSQASQPPQHS and SVGTGTTVSTQASS.

The protein belongs to the protein kinase superfamily. CMGC Ser/Thr protein kinase family. CDC2/CDKX subfamily. Requires Mg(2+) as cofactor. Autophosphorylated on serine and threonine residues. Phosphorylation at Thr-157 by CDK7/Cak1p increases kinase activity. Highly expressed in colon and lung, lower levels present in heart, esophagus, stomach, small intestine and ovary. Localizes to the crypt region of large and small intestine.

It is found in the cytoplasm. The protein localises to the cytosol. The protein resides in the cell projection. It localises to the cilium. Its subcellular location is the nucleus. It is found in the cytoskeleton. The protein localises to the cilium basal body. The catalysed reaction is L-seryl-[protein] + ATP = O-phospho-L-seryl-[protein] + ADP + H(+). The enzyme catalyses L-threonyl-[protein] + ATP = O-phospho-L-threonyl-[protein] + ADP + H(+). Functionally, has an essential role in ciliogenesis, particularly in neuronal and retinal progenitor cells. Phosphorylates KIF3A. Involved in the control of ciliary length. Regulates the ciliary localization of SHH pathway components as well as the localization of IFT components at ciliary tips. May play a role in cardiac development. Regulates intraflagellar transport (IFT) speed and negatively regulates cilium length in a cAMP and mTORC1 signaling -dependent manner and this regulation requires its kinase activity. The polypeptide is Serine/threonine-protein kinase ICK (Cilk1) (Mus musculus (Mouse)).